Here is a 513-residue protein sequence, read N- to C-terminus: EGF-like domain-containing protein 1 (513 aa).

Positions 1 to 21 (MMHTFLRRLCVVALCLGYIKA) are cleaved as a signal peptide. In terms of domain architecture, EGF-like spans 72–108 (PTALCGPPCLNGGECYEPTVGTYMCMCPEAFYGNKCE). 3 disulfides stabilise this stretch: cysteine 76–cysteine 86, cysteine 80–cysteine 96, and cysteine 98–cysteine 107. The 250-residue stretch at 115-364 (ECSGTEITIN…TSCDSVVCPS (250 aa)) folds into the ZP domain. The disordered stretch occupies residues 356 to 411 (SCDSVVCPSPPQSVPSNPQNIPPANPQNIPPANPQNIPPANPQISPSSSQRKRRAA). A compositionally biased stretch (pro residues) spans 375–396 (NIPPANPQNIPPANPQNIPPAN). N-linked (GlcNAc...) asparagine glycosylation is found at asparagine 438 and asparagine 503.

Component of the acid-insoluble organic matrix of calcified layers of the shell (at protein level).

It localises to the secreted. The sequence is that of EGF-like domain-containing protein 1 from Lottia gigantea (Giant owl limpet).